Consider the following 179-residue polypeptide: ATP-dependent protease subunit HslV (179 aa).

Thr-7 is a catalytic residue. Gly-162, Cys-165, and Thr-168 together coordinate Na(+).

This sequence belongs to the peptidase T1B family. HslV subfamily. As to quaternary structure, a double ring-shaped homohexamer of HslV is capped on each side by a ring-shaped HslU homohexamer. The assembly of the HslU/HslV complex is dependent on binding of ATP.

Its subcellular location is the cytoplasm. It carries out the reaction ATP-dependent cleavage of peptide bonds with broad specificity.. With respect to regulation, allosterically activated by HslU binding. Its function is as follows. Protease subunit of a proteasome-like degradation complex believed to be a general protein degrading machinery. This is ATP-dependent protease subunit HslV from Bordetella pertussis (strain Tohama I / ATCC BAA-589 / NCTC 13251).